The chain runs to 360 residues: Phosphoserine aminotransferase (360 aa).

Arg41 contributes to the L-glutamate binding site. Residues 75–76, Trp101, Thr152, Asp172, and Gln195 each bind pyridoxal 5'-phosphate; that span reads GR. Lys196 carries the post-translational modification N6-(pyridoxal phosphate)lysine. 237–238 serves as a coordination point for pyridoxal 5'-phosphate; sequence NT.

The protein belongs to the class-V pyridoxal-phosphate-dependent aminotransferase family. SerC subfamily. Homodimer. Pyridoxal 5'-phosphate serves as cofactor.

It localises to the cytoplasm. It carries out the reaction O-phospho-L-serine + 2-oxoglutarate = 3-phosphooxypyruvate + L-glutamate. It catalyses the reaction 4-(phosphooxy)-L-threonine + 2-oxoglutarate = (R)-3-hydroxy-2-oxo-4-phosphooxybutanoate + L-glutamate. The protein operates within amino-acid biosynthesis; L-serine biosynthesis; L-serine from 3-phospho-D-glycerate: step 2/3. Its pathway is cofactor biosynthesis; pyridoxine 5'-phosphate biosynthesis; pyridoxine 5'-phosphate from D-erythrose 4-phosphate: step 3/5. In terms of biological role, catalyzes the reversible conversion of 3-phosphohydroxypyruvate to phosphoserine and of 3-hydroxy-2-oxo-4-phosphonooxybutanoate to phosphohydroxythreonine. This Pseudoalteromonas translucida (strain TAC 125) protein is Phosphoserine aminotransferase.